Here is a 102-residue protein sequence, read N- to C-terminus: PqqA binding protein (102 aa).

It belongs to the PqqD family. As to quaternary structure, monomer. Interacts with PqqE.

Its pathway is cofactor biosynthesis; pyrroloquinoline quinone biosynthesis. Functions as a PqqA binding protein and presents PqqA to PqqE, in the pyrroloquinoline quinone (PQQ) biosynthetic pathway. The chain is PqqA binding protein from Rhodopseudomonas palustris (strain BisB5).